The sequence spans 601 residues: Glutathione-regulated potassium-efflux system protein KefB (601 aa).

The next 13 helical transmembrane spans lie at 4–24, 29–49, 55–75, 87–107, 111–131, 152–172, 177–197, 207–227, 230–250, 262–282, 284–304, 324–344, and 356–376; these read ADLL…VPLA, IGAV…GLGF, EILH…GLEL, IFGV…GLLM, FLWQ…TAMA, VLLF…LLAG, HFDW…LIGG, FIAA…LVLS, LFMD…GVLL, AIDP…GMSL, LGVL…LVVI, MQFA…FSTA, and ALLL…MKGI. The region spanning 400-519 is the RCK N-terminal domain; that stretch reads KPQVIVVGFG…AGVTQFSRET (120 aa).

Belongs to the monovalent cation:proton antiporter 2 (CPA2) transporter (TC 2.A.37) family. KefB subfamily. As to quaternary structure, interacts with the regulatory subunit KefG.

Its subcellular location is the cell inner membrane. Its function is as follows. Pore-forming subunit of a potassium efflux system that confers protection against electrophiles. Catalyzes K(+)/H(+) antiport. In Salmonella heidelberg (strain SL476), this protein is Glutathione-regulated potassium-efflux system protein KefB.